A 73-amino-acid chain; its full sequence is Large ribosomal subunit protein bL27c (73 aa).

This sequence belongs to the bacterial ribosomal protein bL27 family.

It is found in the plastid. Its subcellular location is the chloroplast. The sequence is that of Large ribosomal subunit protein bL27c (rpl27) from Chrysochromulina alifera (Plankton alga).